The primary structure comprises 276 residues: Mediator of RNA polymerase II transcription subunit 7 (276 aa).

Basic and acidic residues-rich tracts occupy residues 1–11 and 234–263; these read MADADAQRQAE and FGRE…RDAQ. 2 disordered regions span residues 1-27 and 234-276; these read MADA…PPPF and FGRE…MLSQ.

Belongs to the Mediator complex subunit 7 family. Component of the Mediator complex.

It localises to the nucleus. Functionally, component of the Mediator complex, a coactivator involved in the regulated transcription of nearly all RNA polymerase II-dependent genes. Mediator functions as a bridge to convey information from gene-specific regulatory proteins to the basal RNA polymerase II transcription machinery. Mediator is recruited to promoters by direct interactions with regulatory proteins and serves as a scaffold for the assembly of a functional preinitiation complex with RNA polymerase II and the general transcription factors. The sequence is that of Mediator of RNA polymerase II transcription subunit 7 (MED7) from Phaeosphaeria nodorum (strain SN15 / ATCC MYA-4574 / FGSC 10173) (Glume blotch fungus).